The primary structure comprises 265 residues: MIESQRHSYHLVDPSPWPISGSLGALATTVGGVMYMHSFQGGATLLSLGLIFLLYTMFVWWRDVLRESTLEGHHTKAVQLGPRYGSILFIVSEVMFLFAFFWASSHSSLAPTVEIGGIWPPKGIGVLDPWEIPLLNTPILPSSGAAVTWAHHAILAGKEKRAVYALVATVSLALVSTGFQGMEYYQAPSTISDSIYGSTFFLATGFHGFHVIIGTLFLIVCGIRQYLGLMTKKHHVGFEAAAWYWHFVDVVRLFPFVSIYWWGGI.

6 consecutive transmembrane segments (helical) span residues 16–36, 41–61, 84–104, 162–182, 200–220, and 245–265; these read PWPISGSLGALATTVGGVMYM, GGATLLSLGLIFLLYTMFVWW, YGSILFIVSEVMFLFAFFWAS, AVYALVATVSLALVSTGFQGM, FFLATGFHGFHVIIGTLFLIV, and WHFVDVVRLFPFVSIYWWGGI.

The protein belongs to the cytochrome c oxidase subunit 3 family. As to quaternary structure, component of the cytochrome c oxidase (complex IV, CIV), a multisubunit enzyme composed of a catalytic core of 3 subunits and several supernumerary subunits. The complex exists as a monomer or a dimer and forms supercomplexes (SCs) in the inner mitochondrial membrane with ubiquinol-cytochrome c oxidoreductase (cytochrome b-c1 complex, complex III, CIII).

The protein localises to the mitochondrion inner membrane. The catalysed reaction is 4 Fe(II)-[cytochrome c] + O2 + 8 H(+)(in) = 4 Fe(III)-[cytochrome c] + 2 H2O + 4 H(+)(out). In terms of biological role, component of the cytochrome c oxidase, the last enzyme in the mitochondrial electron transport chain which drives oxidative phosphorylation. The respiratory chain contains 3 multisubunit complexes succinate dehydrogenase (complex II, CII), ubiquinol-cytochrome c oxidoreductase (cytochrome b-c1 complex, complex III, CIII) and cytochrome c oxidase (complex IV, CIV), that cooperate to transfer electrons derived from NADH and succinate to molecular oxygen, creating an electrochemical gradient over the inner membrane that drives transmembrane transport and the ATP synthase. Cytochrome c oxidase is the component of the respiratory chain that catalyzes the reduction of oxygen to water. Electrons originating from reduced cytochrome c in the intermembrane space (IMS) are transferred via the dinuclear copper A center (CU(A)) of subunit 2 and heme A of subunit 1 to the active site in subunit 1, a binuclear center (BNC) formed by heme A3 and copper B (CU(B)). The BNC reduces molecular oxygen to 2 water molecules using 4 electrons from cytochrome c in the IMS and 4 protons from the mitochondrial matrix. The polypeptide is Cytochrome c oxidase subunit 3 (COX3) (Aegilops columnaris (Goatgrass)).